A 300-amino-acid chain; its full sequence is Transcription initiation factor IIB 1 (300 aa).

A TFIIB-type zinc finger spans residues 3 to 34 (GKRVCPVCGSTEFIYDPSRGEIVCKVCGYVIE). Residues C7, C10, C26, and C29 each contribute to the Zn(2+) site. A run of 2 repeats spans residues 114 to 197 (SELD…ARHL) and 210 to 291 (DYVN…ELVE).

It belongs to the TFIIB family.

Its function is as follows. Stabilizes TBP binding to an archaeal box-A promoter. Also responsible for recruiting RNA polymerase II to the pre-initiation complex (DNA-TBP-TFIIB). This chain is Transcription initiation factor IIB 1, found in Thermococcus kodakarensis (strain ATCC BAA-918 / JCM 12380 / KOD1) (Pyrococcus kodakaraensis (strain KOD1)).